The chain runs to 440 residues: Chromosome partition protein MukF (440 aa).

The interval 208–236 (LSETSGTLRELQDTLEAAGDKLQANLLRI) is leucine-zipper.

Belongs to the MukF family. As to quaternary structure, interacts, and probably forms a ternary complex, with MukE and MukB via its C-terminal region. The complex formation is stimulated by calcium or magnesium. It is required for an interaction between MukE and MukB.

It is found in the cytoplasm. The protein localises to the nucleoid. Its function is as follows. Involved in chromosome condensation, segregation and cell cycle progression. May participate in facilitating chromosome segregation by condensation DNA from both sides of a centrally located replisome during cell division. Not required for mini-F plasmid partitioning. Probably acts via its interaction with MukB and MukE. Overexpression results in anucleate cells. It has a calcium binding activity. The chain is Chromosome partition protein MukF from Yersinia pestis.